A 118-amino-acid polypeptide reads, in one-letter code: MARIAGVNIPDNKHAVISLTYIFGVGKTTAQKLCDATGVKPDAKVKDLSDEQLEALRTEVGKFTVEGDLRREVQMNIKRLKDLGCFRGLRHRHGLPVRGQRTKTNARTRKGPRKPIRK.

Residues 94 to 118 (GLPVRGQRTKTNARTRKGPRKPIRK) are disordered.

It belongs to the universal ribosomal protein uS13 family. In terms of assembly, part of the 30S ribosomal subunit. Forms a loose heterodimer with protein S19. Forms two bridges to the 50S subunit in the 70S ribosome.

In terms of biological role, located at the top of the head of the 30S subunit, it contacts several helices of the 16S rRNA. In the 70S ribosome it contacts the 23S rRNA (bridge B1a) and protein L5 of the 50S subunit (bridge B1b), connecting the 2 subunits; these bridges are implicated in subunit movement. Contacts the tRNAs in the A and P-sites. The protein is Small ribosomal subunit protein uS13 of Marinobacter nauticus (strain ATCC 700491 / DSM 11845 / VT8) (Marinobacter aquaeolei).